Consider the following 108-residue polypeptide: Large ribosomal subunit protein eL33A (108 aa).

This sequence belongs to the eukaryotic ribosomal protein eL33 family. As to quaternary structure, component of the large ribosomal subunit (LSU). Mature yeast ribosomes consist of a small (40S) and a large (60S) subunit. The 40S small subunit contains 1 molecule of ribosomal RNA (18S rRNA) and at least 33 different proteins. The large 60S subunit contains 3 rRNA molecules (25S, 5.8S and 5S rRNA) and at least 46 different proteins.

It is found in the cytoplasm. The protein localises to the nucleus. The protein resides in the nucleolus. Functionally, component of the ribosome, a large ribonucleoprotein complex responsible for the synthesis of proteins in the cell. The small ribosomal subunit (SSU) binds messenger RNAs (mRNAs) and translates the encoded message by selecting cognate aminoacyl-transfer RNA (tRNA) molecules. The large subunit (LSU) contains the ribosomal catalytic site termed the peptidyl transferase center (PTC), which catalyzes the formation of peptide bonds, thereby polymerizing the amino acids delivered by tRNAs into a polypeptide chain. The nascent polypeptides leave the ribosome through a tunnel in the LSU and interact with protein factors that function in enzymatic processing, targeting, and the membrane insertion of nascent chains at the exit of the ribosomal tunnel. The protein is Large ribosomal subunit protein eL33A (rpl35b) of Schizosaccharomyces pombe (strain 972 / ATCC 24843) (Fission yeast).